We begin with the raw amino-acid sequence, 166 residues long: MFKKLFGKGKEVQKDIAIYAPLTGEFVKIEDIPDPVFAQKMMGEGFGINPTEGEVVSPIAGRVDNVFPTKHAIGLKADNGLELLVHIGLDTVQLDGEGFEVLVSSGDEVNVGDPLVRFNLEYINNNAKSVISPIIITNTDQAASINIYDENAVIKGETKVIDVTMN.

The region spanning 34-138 (DPVFAQKMMG…SVISPIIITN (105 aa)) is the PTS EIIA type-1 domain. Zn(2+) contacts are provided by histidine 71 and histidine 86. Histidine 86 serves as the catalytic Tele-phosphohistidine intermediate; for EIIA activity. Histidine 86 carries the phosphohistidine; by HPr modification.

Heterodimer with glycerol kinase (glpk). The cofactor is Zn(2+).

Its subcellular location is the cytoplasm. The phosphoenolpyruvate-dependent sugar phosphotransferase system (sugar PTS), a major carbohydrate active transport system, catalyzes the phosphorylation of incoming sugar substrates concomitantly with their translocation across the cell membrane. The enzyme II complex composed of PtsG and Crr is involved in glucose transport. The protein is PTS system glucose-specific EIIA component (crr) of Staphylococcus aureus (strain COL).